A 1121-amino-acid chain; its full sequence is Anillin (1121 aa).

Position 1 is an N-acetylmethionine (M1). The segment covering 1–25 has biased composition (basic and acidic residues); that stretch reads MDPFTEKLLERTRARRENLQRKMAE. Residues 1–45 are required for ubiquitination; it reads MDPFTEKLLERTRARRENLQRKMAERPTAVARSAPHAKRGREPLS. Disordered regions lie at residues 1–113, 125–196, and 212–402; these read MDPF…AAIS, ADRG…PVGR, and DDVS…TKAI. The interval 1–154 is interaction with CD2AP; that stretch reads MDPFTEKLLE…MQRLAEQRRH (154 aa). The tract at residues 1 to 228 is nuclear localization; the sequence is MDPFTEKLLE…AKQNSVQEQP (228 aa). Residues S73 and S96 each carry the phosphoserine modification. Residues 96–109 are compositionally biased toward pro residues; the sequence is SPMPAPRQAKPPAP. Positions 130–143 are enriched in polar residues; it reads NSGSEASATSSVKT. Residues 147-157 show a composition bias toward basic and acidic residues; it reads RLAEQRRHWDS. S180 bears the Phosphoserine mark. T192 is modified (phosphothreonine). Residues 216 to 228 are compositionally biased toward polar residues; it reads HSSAKQNSVQEQP. S223, S250, and S259 each carry phosphoserine. The tract at residues 229 to 671 is interaction with F-actin; the sequence is GTACLSKSSS…RDLLYSIDAY (443 aa). Residues 234–250 are compositionally biased toward low complexity; sequence SKSSSASGASASINSSS. Positions 282-298 are enriched in low complexity; sequence SASVSSSVKASSPVTAA. Positions 303-314 are enriched in basic and acidic residues; sequence ENREAQNPELLH. T316 is modified (phosphothreonine). A phosphoserine mark is found at S318 and S334. T359 carries the phosphothreonine modification. Residue K366 is modified to N6-acetyllysine. The span at 368–384 shows a compositional bias: basic and acidic residues; it reads FLERFGERCQEHSKESP. The span at 391 to 401 shows a compositional bias: polar residues; that stretch reads KTPNITPNTKA. Residues T392 and T396 each carry the phosphothreonine modification. Phosphoserine occurs at positions 414 and 444. The tract at residues 490 to 511 is disordered; that stretch reads NEPAVKLSSTEPAGSTESEMTK. Residues 496–511 show a composition bias toward polar residues; the sequence is LSSTEPAGSTESEMTK. Residues S513, S548, and S556 each carry the phosphoserine modification. Residues 564-599 adopt a coiled-coil conformation; it reads FSDVLEEGELDVEKSQEEMDQVGAENSEEQEDALNI. Polar residues predominate over residues 623 to 635; sequence SPPSELRDSNLSA. Residues 623–656 are disordered; sequence SPPSELRDSNLSAASPKPGKFQRTRVPRAESADS. Residues S637, S653, S656, and S659 each carry the phosphoserine modification. The residue at position 666 (Y666) is a Phosphotyrosine. A phosphoserine mark is found at S673, S683, S787, and S924. A localization to the cleavage furrow region spans residues 725–1121; the sequence is QQTVIYQASQ…DACYKPVGKP (397 aa). The PH domain occupies 980–1104; that stretch reads AVEEKGFLTI…WMQKLNQVIV (125 aa).

As to quaternary structure, interacts with F-actin. Interacts with CD2AP. May interact with RHOA. Interacts with FZR1/CDH1 during mitotic exit. In terms of processing, phosphorylated during mitosis. Post-translationally, ubiquitinated, and this requires FZR1/CDH1.

Its subcellular location is the nucleus. The protein localises to the cytoplasm. The protein resides in the cytoskeleton. It localises to the cell cortex. It is found in the cell projection. Its subcellular location is the bleb. Its function is as follows. Required for cytokinesis. Essential for the structural integrity of the cleavage furrow and for completion of cleavage furrow ingression. Plays a role in bleb assembly during metaphase and anaphase of mitosis. May play a significant role in podocyte cell migration. In Mus musculus (Mouse), this protein is Anillin (Anln).